Reading from the N-terminus, the 493-residue chain is Ectonucleoside triphosphate diphosphohydrolase 8 (493 aa).

The Cytoplasmic portion of the chain corresponds to 1-7; the sequence is MEYKGKV. The helical transmembrane segment at 8–28 threads the bilayer; it reads VAGLLTATCVFSIIALILSAV. Topologically, residues 29-463 are extracellular; the sequence is DVKDVFLPPG…ALEHVKGHEP (435 aa). N65, N79, and N133 each carry an N-linked (GlcNAc...) asparagine glycan. A disulfide bridge links C76 with C100. Residue E166 is the Proton acceptor of the active site. Residues N223, N234, N267, N324, N330, N361, N372, N382, and N445 are each glycosylated (N-linked (GlcNAc...) asparagine). C244 and C291 are joined by a disulfide. Cysteines 327 and 333 form a disulfide. A disulfide bond links C379 and C401. The chain crosses the membrane as a helical span at residues 464 to 486; it reads SLWAGAISFIVLAIVAGLVAILL. Residues 487-493 lie on the Cytoplasmic side of the membrane; the sequence is QCFWKSK.

Belongs to the GDA1/CD39 NTPase family. Ca(2+) serves as cofactor. Mg(2+) is required as a cofactor. Post-translationally, N-glycosylated.

It is found in the cell membrane. The enzyme catalyses a ribonucleoside 5'-triphosphate + 2 H2O = a ribonucleoside 5'-phosphate + 2 phosphate + 2 H(+). Its function is as follows. Canalicular ectonucleoside NTPDase responsible for the main hepatic NTPDase activity. Ectonucleoside ATPases catalyze the hydrolysis of gamma- and beta-phosphate residues of nucleotides, playing a central role in concentration of extracellular nucleotides. The polypeptide is Ectonucleoside triphosphate diphosphohydrolase 8 (ENTPD8) (Gallus gallus (Chicken)).